We begin with the raw amino-acid sequence, 596 residues long: MNIDLVLREAIQNAFQSVFELSIPLADVNLQPTRKEFEGTHTLIVFPFTTTCKVSPEVIANKIGDWMQTNTQAIASYNVVKGFLNLSIKDTIWLASFNQMYQNKHFGYLPSNRQKIVVEYSSPNTNKPLHLGHLRNNFLGHAVSEILQAAGYEVYKVNLVNDRGIHICKSMVAYQHWGRGETPESRGLKGDQLVGKYYVKFDQVYKEQVAALTQTLGDAEQAAKQAPLLQEAQVMLKQWEAGNEEVLALWRKMNGWVYDGFDITYQKLGITFDKVYYESQTYLLGKEVVAEGLAKGTFYKKQDGSVWIDLTQEGLDEKLLLRADGTSVYITQDLGTADLRYQDFKPNKLVYVVGNEQDYHFEVLAKIMARLGRPYATDLYHLSYGMVDLPTGKMKSREGTVVDADMLIDEMIETAEEHTRELGKIDGFSKEEAKDLYHILAMGALKYFLLRVDAKKRLLFDPQASIDFQGDTGPFIQYTHARIAAVLRKVQQADIAFNDIVEQENFVLHPLEREVIVELAAFPKKLQESALAYAPAILAQHVLEIAKAYNRMYAELSILHEQDTKVQLFRIQLSVLVAQVIKTVMHLLGIVVPERM.

Positions 123–133 (PNTNKPLHLGH) match the 'HIGH' region motif.

It belongs to the class-I aminoacyl-tRNA synthetase family. As to quaternary structure, monomer.

The protein localises to the cytoplasm. It catalyses the reaction tRNA(Arg) + L-arginine + ATP = L-arginyl-tRNA(Arg) + AMP + diphosphate. The chain is Arginine--tRNA ligase from Amoebophilus asiaticus (strain 5a2).